The sequence spans 914 residues: MDYKDTLLMPKTDFPMRGGLPNKEPQIQAQWDEKKLYEKILKKNEGRTPYILHDGPPYANGQIHMGHALNKIIKDMIMRYKAMNGYYAPYVPGWDTHGLPIETALTKKGVDRKSMSEAEFRELCRAYALEQIELQKADFKRLGVNGDWENPYITLQEKFEAEQIRLFGDMAAKGYIYKGKKPVYWSPSSESSLAEAEIEYQDKVSPSIYVAFDVLDGKGLVDDDVKFVIWTTTPWTLPANVAIALNKDLDYVQVRVNDTSYIVAQALLDNVCDAVGWDKEGVQIEKTFKGADLEFVKARHPFIDRESLIILGDHVTTDAGTGCVHTAPGHGEDDFIVGQKYELDVISPVDGKGVYTSEAGEFEGMYYDKANKVITEKLEASGHLLKLDFFKHSYPHDWRTKKPVIFRATPQWFASINKVRQDILNAIEETEFKVEWGKTRIYNMIRDRGDWVISRQRVWGVPLPVFYAENGDIIMDKAVIEHVATLVEKHGTNVWYEREATDLLPEGYTHPGSPNGVFTKEKDIMDVWFDSGSSHRGVLEARPELSFPADLYFEGSDQYRGWFNSSITTAVATRGKSPYKKLLSHGFVMDGQGRKMSKSLGNTVLPEKVVKQMGADIIRLWVMSVDYLADVRISDDILKQVSEVYRKIRNTFKFLLGNVNDFNPATDAVPYAELVEIDQFMLNKLYTFVNNAHKHYDNNDYLFMYQELQNFINVELSNFYLDYGKDILYIEAQDSHVRRSMQTVVYEVLTSLTKVLAPIIPHTADEIWSHTPHVTEESVHLADMPEVQSVDTALIGKWNHFLEIRDDVLKAIEETRNDKVIGKSLEAAVYIQAKNEEDQALLKSFDNLHQLFITSYAEVVDEPQGTDYNLSNVLVKHAEGEKCERCWNYSTVLTEESHAHPHVCPRCLSVLESK.

The short motif at 57-67 (PYANGQIHMGH) is the 'HIGH' region element. Glu554 is a binding site for L-isoleucyl-5'-AMP. The 'KMSKS' region signature appears at 595–599 (KMSKS). Residue Lys598 coordinates ATP. The Zn(2+) site is built by Cys883, Cys886, Cys904, and Cys907.

Belongs to the class-I aminoacyl-tRNA synthetase family. IleS type 1 subfamily. Monomer. Requires Zn(2+) as cofactor.

The protein localises to the cytoplasm. The enzyme catalyses tRNA(Ile) + L-isoleucine + ATP = L-isoleucyl-tRNA(Ile) + AMP + diphosphate. Its function is as follows. Catalyzes the attachment of isoleucine to tRNA(Ile). As IleRS can inadvertently accommodate and process structurally similar amino acids such as valine, to avoid such errors it has two additional distinct tRNA(Ile)-dependent editing activities. One activity is designated as 'pretransfer' editing and involves the hydrolysis of activated Val-AMP. The other activity is designated 'posttransfer' editing and involves deacylation of mischarged Val-tRNA(Ile). In Macrococcus caseolyticus (strain JCSC5402) (Macrococcoides caseolyticum), this protein is Isoleucine--tRNA ligase.